The chain runs to 153 residues: Insulin-like growth factor 1 (153 aa).

The tract at residues 49–77 (GPETLCGAELVDALQFVCGDRGFYFSKPT) is b. 3 disulfide bridges follow: Cys54-Cys96, Cys66-Cys109, and Cys95-Cys100. Residues 78–89 (GYGSSSRRLHHK) are c. Residues 90-110 (GIVDECCFQSCDLRRLEMYCA) are a. Positions 111-118 (PIKPPKSA) are d. Residues 119–153 (RSVRAQRHTDMPKAQKEVHLKNTSRGNTGNRNYRM) constitute a propeptide, e peptide. A disordered region spans residues 119–153 (RSVRAQRHTDMPKAQKEVHLKNTSRGNTGNRNYRM). Positions 125–138 (RHTDMPKAQKEVHL) are enriched in basic and acidic residues. Over residues 139–153 (KNTSRGNTGNRNYRM) the composition is skewed to polar residues.

The protein belongs to the insulin family. Forms a ternary complex with IGFR1 and ITGAV:ITGB3. Forms a ternary complex with IGFR1 and ITGA6:ITGB4. Forms a ternary complex with IGFBP3 and ALS.

It is found in the secreted. Functionally, the insulin-like growth factors, isolated from plasma, are structurally and functionally related to insulin but have a much higher growth-promoting activity. Acts as a ligand for IGF1R. Binds to the alpha subunit of IGF1R, leading to the activation of the intrinsic tyrosine kinase activity which autophosphorylates tyrosine residues in the beta subunit thus initiatiating a cascade of down-stream signaling events leading to activation of the PI3K-AKT/PKB and the Ras-MAPK pathways. Binds to integrins. Its binding to integrins and subsequent ternary complex formation with integrins and IGFR1 are essential for IGF1 signaling. The protein is Insulin-like growth factor 1 of Gallus gallus (Chicken).